The sequence spans 708 residues: Glycogen [starch] synthase isoform 1 (708 aa).

Arg20 contacts UDP. Ser159 is subject to Phosphoserine. UDP-alpha-D-glucose-binding residues include His193 and Arg199. 5 residues coordinate alpha-D-glucose 6-phosphate: His280, Glu281, Gln283, His286, and Lys290. Arg320 contacts UDP. Arg320 is a binding site for UDP-alpha-D-glucose. Ser363 is modified (phosphoserine). His500 lines the alpha-D-glucose 6-phosphate pocket. Residues Glu509, Trp511, and Gly512 each contribute to the UDP-alpha-D-glucose site. Thr514 provides a ligand contact to UDP. A Phosphoserine modification is found at Ser560. The alpha-D-glucose 6-phosphate site is built by Arg583 and Arg587. Phosphoserine is present on residues Ser651 and Ser655. A phosphoserine; by PKA mark is found at Ser660 and Ser662. The segment at Ser687 to Asn708 is disordered. Residues Asp693–Asn708 are compositionally biased toward acidic residues.

This sequence belongs to the glycosyltransferase 3 family.

It carries out the reaction [(1-&gt;4)-alpha-D-glucosyl](n) + UDP-alpha-D-glucose = [(1-&gt;4)-alpha-D-glucosyl](n+1) + UDP + H(+). The protein operates within glycan biosynthesis; glycogen biosynthesis. Allosteric activation by glucose-6-phosphate, and phosphorylation by a cAMP-dependent kinase. In terms of biological role, glycogen synthase participates in the glycogen biosynthetic process along with glycogenin and glycogen branching enzyme. Extends the primer composed of a few glucose units formed by glycogenin by adding new glucose units to it. In this context, glycogen synthase transfers the glycosyl residue from UDP-Glc to the non-reducing end of alpha-1,4-glucan. The chain is Glycogen [starch] synthase isoform 1 (GSY1) from Saccharomyces cerevisiae (strain ATCC 204508 / S288c) (Baker's yeast).